The sequence spans 271 residues: Cytosolic Fe-S cluster assembly factor NUBP2 (271 aa).

Position 1 is an N-acetylmethionine (methionine 1). An ATP-binding site is contributed by glycine 22 to serine 29. [4Fe-4S] cluster-binding residues include cysteine 196 and cysteine 199.

It belongs to the Mrp/NBP35 ATP-binding proteins family. NUBP2/CFD1 subfamily. Heterotetramer of 2 NUBP1 and 2 NUBP2 chains. Interacts with KIFC1. Interacts with NUBP1. The cofactor is [4Fe-4S] cluster. In terms of tissue distribution, widely expressed with highest expression in skeletal muscle.

The protein resides in the nucleus. It localises to the cytoplasm. Its subcellular location is the cytoskeleton. The protein localises to the microtubule organizing center. It is found in the centrosome. The protein resides in the cilium axoneme. It localises to the centriole. Functionally, component of the cytosolic iron-sulfur (Fe/S) protein assembly (CIA) machinery. Required for maturation of extramitochondrial Fe-S proteins. The NUBP1-NUBP2 heterotetramer forms a Fe-S scaffold complex, mediating the de novo assembly of an Fe-S cluster and its transfer to target apoproteins. Negatively regulates cilium formation and structure. The polypeptide is Cytosolic Fe-S cluster assembly factor NUBP2 (Homo sapiens (Human)).